The sequence spans 279 residues: MDNKNSVIKFENVSFSYNSKKQVLKNVSYEIYEKEYVCIVGHNGSGKSTMSKLLTGILKPLAGTIYLFGYAISRDNIKFLRDNVGIIFQNPDNQFIGITAEDDIAFGLENRKIPRGEIKRIIDSVADKVGIKDILKFEPHKLSGGQKQRVAIASVLAINPSIILFDESTSMLDPKGKKDIKSFMLQLRNQGKTVISITHDMEEVVNCDRVLVMDHGNLIKQGRPDEIFKDKQFLRDINLDVPFSLDLAMQLNELDEKINSTLRYNELIDNICSRVDQKD.

Residues isoleucine 8–aspartate 240 form the ABC transporter domain. Glycine 41–serine 48 is a binding site for ATP.

The protein belongs to the ABC transporter superfamily. Energy-coupling factor EcfA family. In terms of assembly, forms a stable energy-coupling factor (ECF) transporter complex composed of 2 membrane-embedded substrate-binding proteins (S component), 2 ATP-binding proteins (A component) and 2 transmembrane proteins (T component).

It is found in the cell membrane. In terms of biological role, ATP-binding (A) component of a common energy-coupling factor (ECF) ABC-transporter complex. Unlike classic ABC transporters this ECF transporter provides the energy necessary to transport a number of different substrates. The sequence is that of Energy-coupling factor transporter ATP-binding protein EcfA1 from Mycoplasmoides gallisepticum (strain R(low / passage 15 / clone 2)) (Mycoplasma gallisepticum).